The following is a 378-amino-acid chain: Apolipoprotein A-IV (378 aa).

Positions 1-20 are cleaved as a signal peptide; that stretch reads MFLKAVVLTLSLVAITGARA. Repeat copies occupy residues 33–54, 60–81, 82–98, 110–130, 131–152, 153–174, 175–196, 197–218, 219–240, 241–262, 263–280, 281–302, and 303–324. The 13 X 22 AA approximate tandem repeats stretch occupies residues 33–324; the sequence is DYFSQLSNNA…QVEELRQKLG (292 aa). Residues 354–378 form a disordered region; it reads EKESQDTPVALPKQEQEQSAVPLES.

Belongs to the apolipoprotein A1/A4/E family. As to quaternary structure, homodimer.

It localises to the secreted. May have a role in chylomicrons and VLDL secretion and catabolism. Required for efficient activation of lipoprotein lipase by ApoC-II; potent activator of LCAT. Apoa-IV is a major component of HDL and chylomicrons. The polypeptide is Apolipoprotein A-IV (Canis lupus familiaris (Dog)).